Reading from the N-terminus, the 134-residue chain is ATP synthase epsilon chain (134 aa).

This sequence belongs to the ATPase epsilon chain family. F-type ATPases have 2 components, CF(1) - the catalytic core - and CF(0) - the membrane proton channel. CF(1) has five subunits: alpha(3), beta(3), gamma(1), delta(1), epsilon(1). CF(0) has three main subunits: a, b and c.

The protein localises to the cell membrane. Produces ATP from ADP in the presence of a proton gradient across the membrane. The chain is ATP synthase epsilon chain from Alkaliphilus oremlandii (strain OhILAs) (Clostridium oremlandii (strain OhILAs)).